A 364-amino-acid chain; its full sequence is MKALILVGGYGTRLRPLTLTQPKPLVEFANKPMMLHQMEALAAVGVDTVVLAVSYRAEQLEAEMTVHADRLGVKLIFSLEEEPLGTAGPLALARKHLEDDDPFFVLNSDVICDFPFKQMVEFHKQHGKEGTIAVTKVEEPSKYGVVVFKEDGKIDDFVEKPQEYVGNKINAGLYIFNSAILDRIPLKPTSIEKEIFPQMATSGNLYAYVLPGFWMDVGQPKDFLKGMSLFLNHVQTTRTGALATGSNIHGTATIRGSVLVDPSATVGENCVIGPDVVIGPRVQIEGGVRIQHSTILSDSTVGNYSWVSGSIIGRECHIGSWVRMENVCVLGDDVVVKDEVYLNEASVLPHKVIAVNVPSKDIIM.

Residues Lys-2–Pro-220 form a substrate-binding domain region. Asp-109 contributes to the GDP-alpha-D-mannose binding site. Residue Asp-109 coordinates Mg(2+). Lys-160 is a catalytic residue. Asp-216 serves as a coordination point for GDP-alpha-D-mannose. Residue Asp-216 participates in Mg(2+) binding. Positions Ala-243–Met-364 are hexapeptide repeat domain.

This sequence belongs to the transferase hexapeptide repeat family. In terms of assembly, component of the GMPPA-GMPPB mannose-1-phosphate guanylyltransferase complex composed of 4 GMPPA subunits and 8 tag-335/GMPPB subunits; the complex is organized into three layers, a central layer made up of 2 GMPPA dimers sandwiched between two layers each made up of 2 tag-335/GMPPB dimers. Catalytic activity of tag-335/GMPPB is reduced when part of the complex and binding of GDP-alpha-D-Mannose by GMPPA induces allosteric feedback inhibition of tag-335/GMPPB. It depends on Mg(2+) as a cofactor.

It carries out the reaction alpha-D-mannose 1-phosphate + GTP + H(+) = GDP-alpha-D-mannose + diphosphate. Its pathway is nucleotide-sugar biosynthesis; GDP-alpha-D-mannose biosynthesis; GDP-alpha-D-mannose from alpha-D-mannose 1-phosphate (GTP route): step 1/1. With respect to regulation, enzyme activity is reduced by incorporation into the GMPPA-GMPPB mannose-1-phosphate guanylyltransferase complex. Allosterically inhibited, when part of the GMPPA-GMPPB complex, by GDP-alpha-D-mannose binding to GMPPA. Its function is as follows. Catalytic subunit of the GMPPA-GMPPB mannose-1-phosphate guanylyltransferase complex. Catalyzes the formation of GDP-mannose, an essential precursor of glycan moieties of glycoproteins and glycolipids. Can catalyze the reverse reaction in vitro. Together with GMPPA regulates GDP-alpha-D-mannose levels. The sequence is that of Mannose-1-phosphate guanylyltransferase catalytic subunit beta from Caenorhabditis briggsae.